The following is a 58-amino-acid chain: DNA-directed RNA polymerases I, II, and III subunit RPABC4 (58 aa).

Positions 19, 22, 36, and 39 each coordinate Zn(2+). A C4-type zinc finger spans residues 19–39; the sequence is CGECHTENEIKSRDPIRCREC.

The protein belongs to the archaeal Rpo12/eukaryotic RPC10 RNA polymerase subunit family. In terms of assembly, component of the RNA polymerase I (Pol I), RNA polymerase II (Pol II) and RNA polymerase III (Pol III) complexes consisting of at least 13, 12 and 17 subunits, respectively. Pol I complex consists of a ten-subunit catalytic core composed of POLR1A/RPA1, POLR1B/RPA2, POLR1C/RPAC1, POLR1D/RPAC2, POLR1H/RPA12, POLR2E/RPABC1, POLR2F/RPABC2, POLR2H/RPABC3, POLR2K/RPABC4 and POLR2L/RPABC5; a mobile stalk subunit POLR1F/RPA43 protruding from the core and additional subunits homologous to general transcription factors POLR1E/RPA49 and POLR1G/RPA34. Part of Pol I pre-initiation complex (PIC), in which Pol I core assembles with RRN3 and promoter-bound UTBF and SL1/TIF-IB complex. Pol II complex contains a ten-subunit catalytic core composed of POLR2A/RPB1, POLR2B/RPB2, POLR2C/RPB3, POLR2I/RPB9, POLR2J/RPB11, POLR2E/RPABC1, POLR2F/RPABC2, POLR2H/RPABC3, POLR2K/RPABC4 and POLR2L/RPABC5 and a mobile stalk composed of two subunits POLR2D/RPB4 and POLR2G/RPB7. Part of Pol II(G) complex, in which Pol II core associates with an additional subunit POLR2M; unlike conventional Pol II, Pol II(G) functions as a transcriptional repressor. Part of TBP-based Pol II pre-initiation complex (PIC), in which Pol II core assembles with general transcription factors and other specific initiation factors including GTF2E1, GTF2E2, GTF2F1, GTF2F2, TCEA1, ERCC2, ERCC3, GTF2H2, GTF2H3, GTF2H4, GTF2H5, GTF2A1, GTF2A2, GTF2B and TBP; this large multi-subunit PIC complex mediates DNA unwinding and targets Pol II core to the transcription start site where the first phosphodiester bond forms. Pol III complex consists of a ten-subunit catalytic core composed of POLR3A/RPC1, POLR3B/RPC2, POLR1C/RPAC1, POLR1D/RPAC2, POLR3K/RPC10, POLR2E/RPABC1, POLR2F/RPABC2, POLR2H/RPABC3, POLR2K/RPABC4 and POLR2L/RPABC5; a mobile stalk composed of two subunits POLR3H/RPC8 and CRCP/RPC9, protruding from the core and functioning primarily in transcription initiation; and additional subunits homologous to general transcription factors of the RNA polymerase II machinery, POLR3C/RPC3-POLR3F/RPC6-POLR3G/RPC7 heterotrimer required for transcription initiation and POLR3D/RPC4-POLR3E/RPC5 heterodimer involved in both transcription initiation and termination.

Its subcellular location is the nucleus. It is found in the nucleolus. Its function is as follows. DNA-dependent RNA polymerase catalyzes the transcription of DNA into RNA using the four ribonucleoside triphosphates as substrates. Common component of RNA polymerases I, II and III which synthesize ribosomal RNA precursors, mRNA precursors and many functional non-coding RNAs, and a small RNAs, such as 5S rRNA and tRNAs, respectively. The polypeptide is DNA-directed RNA polymerases I, II, and III subunit RPABC4 (POLR2K) (Bos taurus (Bovine)).